A 298-amino-acid chain; its full sequence is Porphobilinogen deaminase (298 aa).

Cys242 bears the S-(dipyrrolylmethanemethyl)cysteine mark.

It belongs to the HMBS family. In terms of assembly, monomer. Dipyrromethane serves as cofactor.

It carries out the reaction 4 porphobilinogen + H2O = hydroxymethylbilane + 4 NH4(+). It functions in the pathway porphyrin-containing compound metabolism; protoporphyrin-IX biosynthesis; coproporphyrinogen-III from 5-aminolevulinate: step 2/4. Tetrapolymerization of the monopyrrole PBG into the hydroxymethylbilane pre-uroporphyrinogen in several discrete steps. The chain is Porphobilinogen deaminase from Fusobacterium nucleatum subsp. nucleatum (strain ATCC 25586 / DSM 15643 / BCRC 10681 / CIP 101130 / JCM 8532 / KCTC 2640 / LMG 13131 / VPI 4355).